Reading from the N-terminus, the 804-residue chain is Phenylalanine--tRNA ligase beta subunit (804 aa).

The region spanning 40 to 161 (FSMIDYLIIG…KANLGDTEVY (122 aa)) is the tRNA-binding domain. The B5 domain maps to 413-486 (EYHQQVKVNY…KILNINLFQP (74 aa)). Mg(2+) is bound by residues Asp464, Asp470, Glu473, and Glu474. Positions 710–804 (DHYQEVTRDI…DLMKTKQILI (95 aa)) constitute an FDX-ACB domain.

The protein belongs to the phenylalanyl-tRNA synthetase beta subunit family. Type 1 subfamily. As to quaternary structure, tetramer of two alpha and two beta subunits. Mg(2+) is required as a cofactor.

The protein localises to the cytoplasm. The catalysed reaction is tRNA(Phe) + L-phenylalanine + ATP = L-phenylalanyl-tRNA(Phe) + AMP + diphosphate + H(+). The polypeptide is Phenylalanine--tRNA ligase beta subunit (Mycoplasmoides gallisepticum (strain R(low / passage 15 / clone 2)) (Mycoplasma gallisepticum)).